Consider the following 429-residue polypeptide: Glutamyl-tRNA reductase (429 aa).

Residues 50–53 (TCNR), S108, 113–115 (EPQ), and Q119 contribute to the substrate site. The active-site Nucleophile is the C51. Residue 188-193 (GAGEMI) participates in NADP(+) binding.

This sequence belongs to the glutamyl-tRNA reductase family. In terms of assembly, homodimer.

The catalysed reaction is (S)-4-amino-5-oxopentanoate + tRNA(Glu) + NADP(+) = L-glutamyl-tRNA(Glu) + NADPH + H(+). It participates in porphyrin-containing compound metabolism; protoporphyrin-IX biosynthesis; 5-aminolevulinate from L-glutamyl-tRNA(Glu): step 1/2. Catalyzes the NADPH-dependent reduction of glutamyl-tRNA(Glu) to glutamate 1-semialdehyde (GSA). In Polaromonas naphthalenivorans (strain CJ2), this protein is Glutamyl-tRNA reductase.